An 83-amino-acid chain; its full sequence is UPF0512 protein G (83 aa).

Belongs to the UPF0512 family.

In Dictyostelium discoideum (Social amoeba), this protein is UPF0512 protein G.